Here is a 238-residue protein sequence, read N- to C-terminus: Uridylate kinase (238 aa).

Lys12–Gly15 contributes to the ATP binding site. A UMP-binding site is contributed by Gly54. The ATP site is built by Gly55 and Arg59. UMP is bound by residues Asp74 and Thr135 to Thr142. Residues Thr162, Asn163, Tyr168, and Asp171 each coordinate ATP.

This sequence belongs to the UMP kinase family. Homohexamer.

The protein resides in the cytoplasm. It carries out the reaction UMP + ATP = UDP + ADP. It participates in pyrimidine metabolism; CTP biosynthesis via de novo pathway; UDP from UMP (UMPK route): step 1/1. Inhibited by UTP. Its function is as follows. Catalyzes the reversible phosphorylation of UMP to UDP. This Rhodopseudomonas palustris (strain BisA53) protein is Uridylate kinase.